The sequence spans 225 residues: Glycerol-3-phosphate acyltransferase (225 aa).

6 helical membrane passes run 6 to 26, 55 to 75, 95 to 115, 135 to 155, 160 to 180, and 187 to 207; these read FFFF…LIIG, WGIV…IICL, DIAI…SIFN, PFIG…VGYA, IMAT…PGIT, and ILYF…HSNI.

Belongs to the PlsY family. In terms of assembly, probably interacts with PlsX.

Its subcellular location is the cell membrane. It carries out the reaction an acyl phosphate + sn-glycerol 3-phosphate = a 1-acyl-sn-glycero-3-phosphate + phosphate. Its pathway is lipid metabolism; phospholipid metabolism. Catalyzes the transfer of an acyl group from acyl-phosphate (acyl-PO(4)) to glycerol-3-phosphate (G3P) to form lysophosphatidic acid (LPA). This enzyme utilizes acyl-phosphate as fatty acyl donor, but not acyl-CoA or acyl-ACP. This chain is Glycerol-3-phosphate acyltransferase, found in Phytoplasma australiense.